The primary structure comprises 265 residues: Thiazole synthase (265 aa).

The active-site Schiff-base intermediate with DXP is the Lys103. 1-deoxy-D-xylulose 5-phosphate-binding positions include Gly164, 190–191 (AG), and 212–213 (NT).

Belongs to the ThiG family. In terms of assembly, homotetramer. Forms heterodimers with either ThiH or ThiS.

The protein resides in the cytoplasm. The catalysed reaction is [ThiS sulfur-carrier protein]-C-terminal-Gly-aminoethanethioate + 2-iminoacetate + 1-deoxy-D-xylulose 5-phosphate = [ThiS sulfur-carrier protein]-C-terminal Gly-Gly + 2-[(2R,5Z)-2-carboxy-4-methylthiazol-5(2H)-ylidene]ethyl phosphate + 2 H2O + H(+). It participates in cofactor biosynthesis; thiamine diphosphate biosynthesis. Functionally, catalyzes the rearrangement of 1-deoxy-D-xylulose 5-phosphate (DXP) to produce the thiazole phosphate moiety of thiamine. Sulfur is provided by the thiocarboxylate moiety of the carrier protein ThiS. In vitro, sulfur can be provided by H(2)S. This Bordetella pertussis (strain Tohama I / ATCC BAA-589 / NCTC 13251) protein is Thiazole synthase.